Reading from the N-terminus, the 157-residue chain is Phosphopantetheine adenylyltransferase (157 aa).

Serine 8 serves as a coordination point for substrate. ATP-binding positions include 8 to 9 (SF) and histidine 16. Lysine 40, threonine 72, and arginine 86 together coordinate substrate. Residues 87 to 89 (GLR), glutamate 97, and 122 to 128 (YSFLSSS) each bind ATP.

The protein belongs to the bacterial CoaD family. In terms of assembly, homohexamer. Mg(2+) is required as a cofactor.

It is found in the cytoplasm. It carries out the reaction (R)-4'-phosphopantetheine + ATP + H(+) = 3'-dephospho-CoA + diphosphate. It functions in the pathway cofactor biosynthesis; coenzyme A biosynthesis; CoA from (R)-pantothenate: step 4/5. Functionally, reversibly transfers an adenylyl group from ATP to 4'-phosphopantetheine, yielding dephospho-CoA (dPCoA) and pyrophosphate. The sequence is that of Phosphopantetheine adenylyltransferase from Crocosphaera subtropica (strain ATCC 51142 / BH68) (Cyanothece sp. (strain ATCC 51142)).